The following is a 389-amino-acid chain: Succinate--CoA ligase [ADP-forming] subunit beta (389 aa).

The ATP-grasp domain maps to 9–236 (RDLFEKHGVP…KTTADPLEEK (228 aa)). Residues K45, 52–54 (GRG), A94, and E99 contribute to the ATP site. The Mg(2+) site is built by N191 and D205. Substrate contacts are provided by residues N256 and 318–320 (GIT).

This sequence belongs to the succinate/malate CoA ligase beta subunit family. As to quaternary structure, heterotetramer of two alpha and two beta subunits. Requires Mg(2+) as cofactor.

It carries out the reaction succinate + ATP + CoA = succinyl-CoA + ADP + phosphate. The enzyme catalyses GTP + succinate + CoA = succinyl-CoA + GDP + phosphate. Its pathway is carbohydrate metabolism; tricarboxylic acid cycle; succinate from succinyl-CoA (ligase route): step 1/1. Its function is as follows. Succinyl-CoA synthetase functions in the citric acid cycle (TCA), coupling the hydrolysis of succinyl-CoA to the synthesis of either ATP or GTP and thus represents the only step of substrate-level phosphorylation in the TCA. The beta subunit provides nucleotide specificity of the enzyme and binds the substrate succinate, while the binding sites for coenzyme A and phosphate are found in the alpha subunit. The polypeptide is Succinate--CoA ligase [ADP-forming] subunit beta (Kocuria rhizophila (strain ATCC 9341 / DSM 348 / NBRC 103217 / DC2201)).